The chain runs to 126 residues: Large ribosomal subunit protein bL12 (126 aa).

It belongs to the bacterial ribosomal protein bL12 family. As to quaternary structure, homodimer. Part of the ribosomal stalk of the 50S ribosomal subunit. Forms a multimeric L10(L12)X complex, where L10 forms an elongated spine to which 2 to 4 L12 dimers bind in a sequential fashion. Binds GTP-bound translation factors.

In terms of biological role, forms part of the ribosomal stalk which helps the ribosome interact with GTP-bound translation factors. Is thus essential for accurate translation. The sequence is that of Large ribosomal subunit protein bL12 from Streptococcus pyogenes serotype M28 (strain MGAS6180).